Here is a 69-residue protein sequence, read N- to C-terminus: uncharacterized protein (69 aa).

A helical membrane pass occupies residues 13-35; the sequence is IRSINPTLLNFINYFLLIVPQFI.

It localises to the membrane. This is an uncharacterized protein from Saccharomyces cerevisiae (strain ATCC 204508 / S288c) (Baker's yeast).